Reading from the N-terminus, the 618-residue chain is MISGHDFYTVMAAVVPLYVAMFLAYGSVRWWGIFTPDQCSGINRFVAIFAVPLLSFHFISTNDPYAMNLRFLAADTLQKLLVLAGLAAWSRLPSRTGAPRLDWSITLFSLSTLPNTLVMGIPLLIAMYGPYSGSLMVQIVVLQCIIWYTLMLFLFEFRAARMLIADQFPDTAASIVSLHVDPDVVSLEGGHAETEAEVAADGRLHVTVRRSSVSRRSLLVTPRPSNLTGAEIYSLSSSRNPTPRGSNFNHADFFAMVGGGPPPPTPAAVRGSSFGASELYSLQSSRGPTPRQSNFDEHSARPPKPPATTTGALNHDAKELHMFVWSSSASPVSEVSGLPVFSGGGGGGALDVGAKEIHMVIPADLPQNNGSGKEHEEYGAVALGGGGGGENFSFGGGKTVDGAEAVDEEAALPDGLTKMGSSSTAELHPKVVDVDGPNAGGGAAGAGQYQMPPASVMTRLILIMVWRKLIRNPNTYSSLLGLAWSLVAFRWHVSMPAIVEKSISILSDAGLGMAMFSLGLFMALQPSIIACGKSAAVVSMAVRFLAGPAVMAAASIAIGLRGTLLHVAIVQAALPQGIVPFVFAKEYNVHPAILSTAVIFGMLIALPITLLYYILLGL.

Residues 1–6 lie on the Extracellular side of the membrane; sequence MISGHD. Residues 7–27 traverse the membrane as a helical segment; the sequence is FYTVMAAVVPLYVAMFLAYGS. The Cytoplasmic segment spans residues 28–38; it reads VRWWGIFTPDQ. Residues 39 to 59 form a helical membrane-spanning segment; sequence CSGINRFVAIFAVPLLSFHFI. Val-51 is a (indol-3-yl)acetate binding site. The Extracellular portion of the chain corresponds to 60–70; sequence STNDPYAMNLR. Residues 71-90 traverse the membrane as a helical segment; it reads FLAADTLQKLLVLAGLAAWS. Over 91-104 the chain is Cytoplasmic; sequence RLPSRTGAPRLDWS. A helical transmembrane segment spans residues 105–125; sequence ITLFSLSTLPNTLVMGIPLLI. (indol-3-yl)acetate is bound by residues Asn-115 and Leu-117. Over 126 to 134 the chain is Extracellular; it reads AMYGPYSGS. Residues 135–155 form a helical membrane-spanning segment; that stretch reads LMVQIVVLQCIIWYTLMLFLF. Tyr-148 is a (indol-3-yl)acetate binding site. Over 156-478 the chain is Cytoplasmic; the sequence is EFRAARMLIA…LIRNPNTYSS (323 aa). The segment covering 281 to 293 has biased composition (polar residues); it reads SLQSSRGPTPRQS. The tract at residues 281–312 is disordered; it reads SLQSSRGPTPRQSNFDEHSARPPKPPATTTGA. The chain crosses the membrane as a helical span at residues 479–499; sequence LLGLAWSLVAFRWHVSMPAIV. Residues 500 to 502 are Extracellular-facing; sequence EKS. The chain crosses the membrane as a helical span at residues 503–523; that stretch reads ISILSDAGLGMAMFSLGLFMA. At 524–539 the chain is on the cytoplasmic side; the sequence is LQPSIIACGKSAAVVS. Residues 540–560 form a helical membrane-spanning segment; sequence MAVRFLAGPAVMAAASIAIGL. The Extracellular portion of the chain corresponds to 561 to 563; that stretch reads RGT. The chain crosses the membrane as a helical span at residues 564–584; sequence LLHVAIVQAALPQGIVPFVFA. Residues Ile-578 and Val-579 each contribute to the (indol-3-yl)acetate site. Residues 585 to 597 are Cytoplasmic-facing; that stretch reads KEYNVHPAILSTA. The chain crosses the membrane as a helical span at residues 598–618; it reads VIFGMLIALPITLLYYILLGL.

It belongs to the auxin efflux carrier (TC 2.A.69.1) family. As to quaternary structure, homodimer. As to expression, expressed in coleoptiles, roots, vascular bundles of leaves, shoots, lamina joints and vascular bundles of the lemma and filament. Expressed in stem bases, stems, leaves and young panicles.

It localises to the cell membrane. In terms of biological role, acts as a component of the auxin efflux carrier. Involved in the polar auxin transport which may regulate crown root development and response to water stress. This is Auxin efflux carrier component 3a from Oryza sativa subsp. japonica (Rice).